A 113-amino-acid polypeptide reads, in one-letter code: Iron-sulfur cluster insertion protein ErpA (113 aa).

Cysteine 41, cysteine 105, and cysteine 107 together coordinate iron-sulfur cluster.

Belongs to the HesB/IscA family. As to quaternary structure, homodimer. The cofactor is iron-sulfur cluster.

Functionally, required for insertion of 4Fe-4S clusters for at least IspG. This is Iron-sulfur cluster insertion protein ErpA from Glaesserella parasuis serovar 5 (strain SH0165) (Haemophilus parasuis).